We begin with the raw amino-acid sequence, 987 residues long: UvrABC system protein A (987 aa).

ATP is bound at residue 33–40 (GLSGSGKS). The C4-type zinc-finger motif lies at 255–282 (CPVCDYSLPELEPRLFSFNAPVGACPSC). 2 consecutive ABC transporter domains span residues 312–589 (WDRR…PRSL) and 609–938 (PNPK…QFLA). 642–649 (GVSGSGKS) is an ATP binding site. The C4-type zinc finger occupies 741 to 767 (CEACQGDGMIKVEMHFLPDVYVPCDVC). Residues 948–987 (ETRPAAMANKPDARPPRKVKPEKVAKAAKSATKKTAKKAS) are disordered. Residues 958–972 (PDARPPRKVKPEKVA) show a composition bias toward basic and acidic residues. The segment covering 978 to 987 (ATKKTAKKAS) has biased composition (basic residues).

The protein belongs to the ABC transporter superfamily. UvrA family. Forms a heterotetramer with UvrB during the search for lesions.

It is found in the cytoplasm. Functionally, the UvrABC repair system catalyzes the recognition and processing of DNA lesions. UvrA is an ATPase and a DNA-binding protein. A damage recognition complex composed of 2 UvrA and 2 UvrB subunits scans DNA for abnormalities. When the presence of a lesion has been verified by UvrB, the UvrA molecules dissociate. The sequence is that of UvrABC system protein A from Xanthomonas axonopodis pv. citri (strain 306).